Here is a 217-residue protein sequence, read N- to C-terminus: 3,4-dihydroxy-2-butanone 4-phosphate synthase (217 aa).

D-ribulose 5-phosphate-binding positions include 37–38 (RE), D42, 150–154 (RRGHT), and E174. A Mg(2+)-binding site is contributed by E38. H153 serves as a coordination point for Mg(2+).

The protein belongs to the DHBP synthase family. In terms of assembly, homodimer. It depends on Mg(2+) as a cofactor. Requires Mn(2+) as cofactor.

The enzyme catalyses D-ribulose 5-phosphate = (2S)-2-hydroxy-3-oxobutyl phosphate + formate + H(+). It functions in the pathway cofactor biosynthesis; riboflavin biosynthesis; 2-hydroxy-3-oxobutyl phosphate from D-ribulose 5-phosphate: step 1/1. Its function is as follows. Catalyzes the conversion of D-ribulose 5-phosphate to formate and 3,4-dihydroxy-2-butanone 4-phosphate. This Shewanella sediminis (strain HAW-EB3) protein is 3,4-dihydroxy-2-butanone 4-phosphate synthase.